We begin with the raw amino-acid sequence, 370 residues long: Histidinol-phosphate aminotransferase 3 (370 aa).

Lys-233 is subject to N6-(pyridoxal phosphate)lysine.

It belongs to the class-II pyridoxal-phosphate-dependent aminotransferase family. Histidinol-phosphate aminotransferase subfamily. Homodimer. The cofactor is pyridoxal 5'-phosphate.

The catalysed reaction is L-histidinol phosphate + 2-oxoglutarate = 3-(imidazol-4-yl)-2-oxopropyl phosphate + L-glutamate. It participates in amino-acid biosynthesis; L-histidine biosynthesis; L-histidine from 5-phospho-alpha-D-ribose 1-diphosphate: step 7/9. This is Histidinol-phosphate aminotransferase 3 from Burkholderia lata (strain ATCC 17760 / DSM 23089 / LMG 22485 / NCIMB 9086 / R18194 / 383).